The sequence spans 590 residues: Putative histone-lysine N-methyltransferase PRDM6 (590 aa).

A disordered region spans residues 25 to 87; that stretch reads QLFPHGGGGP…STPASSSTSA (63 aa). The span at 29–42 shows a compositional bias: gly residues; that stretch reads HGGGGPLKGGGAAG. Low complexity predominate over residues 71–87; that stretch reads ASLSSASSTPASSSTSA. Positions 241–360 constitute an SET domain; sequence REVCLCTSTV…RGTELLVWYN (120 aa). The segment at 468-490 adopts a C2H2-type 1; degenerate zinc-finger fold; the sequence is WKCGQCFKTFTQRILLQMHVCTQ. 2 consecutive C2H2-type zinc fingers follow at residues 496–518 and 524–546; these read YQCGHCSQSFSQPSELRNHVVTH and FKCGYCGRAFAGATTLNNHIRTH. The C2H2-type 4; degenerate zinc-finger motif lies at 552–574; the sequence is FKCERCERSFTQATQLSRHQRMP.

It belongs to the class V-like SAM-binding methyltransferase superfamily. Interacts with HDAC1, HDAC2, HDAC3, CBX1 and EP300.

Its subcellular location is the nucleus. The enzyme catalyses L-lysyl(20)-[histone H4] + S-adenosyl-L-methionine = N(6)-methyl-L-lysyl(20)-[histone H4] + S-adenosyl-L-homocysteine + H(+). In terms of biological role, putative histone methyltransferase that acts as a transcriptional repressor of smooth muscle gene expression. Promotes the transition from differentiated to proliferative smooth muscle by suppressing differentiation and maintaining the proliferative potential of vascular smooth muscle cells. Also plays a role in endothelial cells by inhibiting endothelial cell proliferation, survival and differentiation. It is unclear whether it has histone methyltransferase activity in vivo. According to some authors, it does not act as a histone methyltransferase by itself and represses transcription by recruiting EHMT2/G9a. According to others, it possesses histone methyltransferase activity when associated with other proteins and specifically methylates 'Lys-20' of histone H4 in vitro. 'Lys-20' methylation represents a specific tag for epigenetic transcriptional repression. The chain is Putative histone-lysine N-methyltransferase PRDM6 (PRDM6) from Bos taurus (Bovine).